The following is a 176-amino-acid chain: ATP-dependent protease subunit HslV (176 aa).

Residue threonine 5 is part of the active site. Na(+) is bound by residues glycine 161, cysteine 164, and threonine 167.

It belongs to the peptidase T1B family. HslV subfamily. In terms of assembly, a double ring-shaped homohexamer of HslV is capped on each side by a ring-shaped HslU homohexamer. The assembly of the HslU/HslV complex is dependent on binding of ATP.

The protein resides in the cytoplasm. The catalysed reaction is ATP-dependent cleavage of peptide bonds with broad specificity.. Allosterically activated by HslU binding. In terms of biological role, protease subunit of a proteasome-like degradation complex believed to be a general protein degrading machinery. The polypeptide is ATP-dependent protease subunit HslV (Sulfurovum sp. (strain NBC37-1)).